The following is a 306-amino-acid chain: Acetylglutamate kinase (306 aa).

Residues 79-80 (GG), Arg101, and Asn203 contribute to the substrate site.

Belongs to the acetylglutamate kinase family. ArgB subfamily.

It is found in the cytoplasm. The catalysed reaction is N-acetyl-L-glutamate + ATP = N-acetyl-L-glutamyl 5-phosphate + ADP. The protein operates within amino-acid biosynthesis; L-arginine biosynthesis; N(2)-acetyl-L-ornithine from L-glutamate: step 2/4. Catalyzes the ATP-dependent phosphorylation of N-acetyl-L-glutamate. The protein is Acetylglutamate kinase of Polaromonas naphthalenivorans (strain CJ2).